A 338-amino-acid chain; its full sequence is Tryptophan--tRNA ligase (338 aa).

ATP contacts are provided by residues 11–13 (QPS) and 19–20 (GN). The short motif at 12-20 (PSGELSIGN) is the 'HIGH' region element. D135 provides a ligand contact to L-tryptophan. Residues 147-149 (GSD), V189, and 198-202 (KMSKS) each bind ATP. Residues 198-202 (KMSKS) carry the 'KMSKS' region motif.

This sequence belongs to the class-I aminoacyl-tRNA synthetase family. As to quaternary structure, homodimer.

It localises to the cytoplasm. The enzyme catalyses tRNA(Trp) + L-tryptophan + ATP = L-tryptophyl-tRNA(Trp) + AMP + diphosphate + H(+). Catalyzes the attachment of tryptophan to tRNA(Trp). This chain is Tryptophan--tRNA ligase, found in Vibrio vulnificus (strain CMCP6).